The chain runs to 440 residues: Adenylosuccinate synthetase (440 aa).

Residues 13–19 (GDEGKGK) and 41–43 (GHT) contribute to the GTP site. Asp14 acts as the Proton acceptor in catalysis. Residues Asp14 and Gly41 each coordinate Mg(2+). IMP-binding positions include 14-17 (DEGK), 39-42 (NAGH), Thr135, Arg149, Gln230, Thr245, and Arg313. His42 acts as the Proton donor in catalysis. Residue 309 to 315 (TVTKRKR) participates in substrate binding. GTP contacts are provided by residues Arg315, 341–343 (KLD), and 423–425 (STG).

This sequence belongs to the adenylosuccinate synthetase family. Homodimer. Requires Mg(2+) as cofactor.

The protein localises to the cytoplasm. The enzyme catalyses IMP + L-aspartate + GTP = N(6)-(1,2-dicarboxyethyl)-AMP + GDP + phosphate + 2 H(+). It functions in the pathway purine metabolism; AMP biosynthesis via de novo pathway; AMP from IMP: step 1/2. Functionally, plays an important role in the de novo pathway of purine nucleotide biosynthesis. Catalyzes the first committed step in the biosynthesis of AMP from IMP. This Methylobacillus flagellatus (strain ATCC 51484 / DSM 6875 / VKM B-1610 / KT) protein is Adenylosuccinate synthetase.